A 359-amino-acid chain; its full sequence is Fructose-bisphosphate aldolase (359 aa).

A D-glyceraldehyde 3-phosphate-binding site is contributed by S62. D110 acts as the Proton donor in catalysis. H111, D145, E175, and H227 together coordinate Zn(2+). G228 lines the dihydroxyacetone phosphate pocket. H265 provides a ligand contact to Zn(2+). Dihydroxyacetone phosphate contacts are provided by residues 266 to 268 and 287 to 290; these read GGS and NIDT.

It belongs to the class II fructose-bisphosphate aldolase family. In terms of assembly, homodimer. Zn(2+) serves as cofactor.

It catalyses the reaction beta-D-fructose 1,6-bisphosphate = D-glyceraldehyde 3-phosphate + dihydroxyacetone phosphate. It participates in carbohydrate degradation; glycolysis; D-glyceraldehyde 3-phosphate and glycerone phosphate from D-glucose: step 4/4. Catalyzes the aldol condensation of dihydroxyacetone phosphate (DHAP or glycerone-phosphate) with glyceraldehyde 3-phosphate (G3P) to form fructose 1,6-bisphosphate (FBP) in gluconeogenesis and the reverse reaction in glycolysis. The polypeptide is Fructose-bisphosphate aldolase (fba) (Haemophilus influenzae (strain ATCC 51907 / DSM 11121 / KW20 / Rd)).